Here is a 274-residue protein sequence, read N- to C-terminus: Thiamine kinase (274 aa).

This sequence belongs to the thiamine kinase family.

It catalyses the reaction thiamine + ATP = thiamine phosphate + ADP + H(+). It functions in the pathway cofactor biosynthesis; thiamine diphosphate biosynthesis; thiamine phosphate from thiamine: step 1/1. Functionally, catalyzes the ATP-dependent phosphorylation of thiamine to thiamine phosphate. Is involved in thiamine salvage. This chain is Thiamine kinase, found in Salmonella dublin (strain CT_02021853).